The primary structure comprises 217 residues: Probable cutinase 3 (217 aa).

The first 17 residues, 1–17 (MSLRSLFVAGLATLALA), serve as a signal peptide directing secretion. Intrachain disulfides connect Cys-39-Cys-118 and Cys-65-Cys-79. The active-site Nucleophile is Ser-129. A disulfide bond links Cys-180 and Cys-187. The active site involves Asp-184. His-197 (proton donor/acceptor) is an active-site residue.

It belongs to the cutinase family.

The protein resides in the secreted. The enzyme catalyses cutin + H2O = cutin monomers.. Functionally, catalyzes the hydrolysis of complex carboxylic polyesters found in the cell wall of plants. Degrades cutin, a macromolecule that forms the structure of the plant cuticle. The sequence is that of Probable cutinase 3 from Neosartorya fischeri (strain ATCC 1020 / DSM 3700 / CBS 544.65 / FGSC A1164 / JCM 1740 / NRRL 181 / WB 181) (Aspergillus fischerianus).